A 445-amino-acid chain; its full sequence is Tryptophan 5-hydroxylase 1 (445 aa).

In terms of domain architecture, ACT spans 19-94; that stretch reads AIIFSLKNEV…SIVSMNPTEH (76 aa). The residue at position 58 (Ser58) is a Phosphoserine; by PKA. L-tryptophan is bound by residues Tyr236, Arg258, and Thr266. Residues His273, His278, and Glu318 each coordinate Fe cation. L-tryptophan contacts are provided by Ser337 and Ile367.

Belongs to the biopterin-dependent aromatic amino acid hydroxylase family. In terms of assembly, homotetramer. Fe(2+) serves as cofactor.

The catalysed reaction is (6R)-L-erythro-5,6,7,8-tetrahydrobiopterin + L-tryptophan + O2 = 5-hydroxy-L-tryptophan + (4aS,6R)-4a-hydroxy-L-erythro-5,6,7,8-tetrahydrobiopterin. The protein operates within aromatic compound metabolism; serotonin biosynthesis; serotonin from L-tryptophan: step 1/2. Oxidizes L-tryptophan to 5-hydroxy-l-tryptophan in the rate-determining step of serotonin biosynthesis. The chain is Tryptophan 5-hydroxylase 1 (TPH1) from Gallus gallus (Chicken).